The following is a 247-amino-acid chain: MSLLSVKDLTGGYTRNPVLKNVSFTLEPNQIVGLIGLNGAGKSTTIRHIIGLMDPHKGSIELNGKTFAEDPEGYRSQFTYIPETPVLYEELTLMEHLELTAMAYGLSKETMEKRLPPLLKEFRMEKRLKWFPAHFSKGMKQKVMIMCAFLAEPALYIIDEPFLGLDPLAINALLERMNEAKKGGASVLMSTHILATAERYCDSFIILHNGEVRARGTLSELREQFGMKDAALDDLYLELTKEDAGHE.

In terms of domain architecture, ABC transporter spans 4–234; the sequence is LSVKDLTGGY…FGMKDAALDD (231 aa). Residue 36-43 coordinates ATP; that stretch reads GLNGAGKS.

This sequence belongs to the ABC transporter superfamily.

Its function is as follows. Has a role in exoprotein production, sporulation and competence. The protein is ABC-type transporter ATP-binding protein EcsA (ecsA) of Bacillus subtilis (strain 168).